The following is a 449-amino-acid chain: Chromosomal replication initiator protein DnaA (449 aa).

The interval Met1–Leu72 is domain I, interacts with DnaA modulators. The domain II stretch occupies residues Leu72–Thr109. The interval His110–Ser326 is domain III, AAA+ region. ATP is bound by residues Gly154, Gly156, Lys157, and Thr158. A domain IV, binds dsDNA region spans residues Thr327–Gly449.

This sequence belongs to the DnaA family. In terms of assembly, oligomerizes as a right-handed, spiral filament on DNA at oriC.

It is found in the cytoplasm. Its function is as follows. Plays an essential role in the initiation and regulation of chromosomal replication. ATP-DnaA binds to the origin of replication (oriC) to initiate formation of the DNA replication initiation complex once per cell cycle. Binds the DnaA box (a 9 base pair repeat at the origin) and separates the double-stranded (ds)DNA. Forms a right-handed helical filament on oriC DNA; dsDNA binds to the exterior of the filament while single-stranded (ss)DNA is stabiized in the filament's interior. The ATP-DnaA-oriC complex binds and stabilizes one strand of the AT-rich DNA unwinding element (DUE), permitting loading of DNA polymerase. After initiation quickly degrades to an ADP-DnaA complex that is not apt for DNA replication. Binds acidic phospholipids. This chain is Chromosomal replication initiator protein DnaA, found in Lacticaseibacillus casei (strain BL23) (Lactobacillus casei).